The primary structure comprises 477 residues: Cobyric acid synthase (477 aa).

One can recognise a GATase cobBQ-type domain in the interval 248–432 (GLHIACPMLS…LHGLFSGDGF (185 aa)). Catalysis depends on Cys330, which acts as the Nucleophile. The active site involves His424.

Belongs to the CobB/CobQ family. CobQ subfamily.

Its pathway is cofactor biosynthesis; adenosylcobalamin biosynthesis. In terms of biological role, catalyzes amidations at positions B, D, E, and G on adenosylcobyrinic A,C-diamide. NH(2) groups are provided by glutamine, and one molecule of ATP is hydrogenolyzed for each amidation. In Paracoccus denitrificans (strain Pd 1222), this protein is Cobyric acid synthase.